Reading from the N-terminus, the 431-residue chain is Dual-specificity RNA methyltransferase RlmN (431 aa).

Residues Met1 to Glu26 are disordered. A compositionally biased stretch (basic and acidic residues) spans Ala9–Glu26. Residue Glu138 is the Proton acceptor of the active site. A Radical SAM core domain is found at Ala144–Leu394. Residues Cys151 and Cys397 are joined by a disulfide bond. Residues Cys158, Cys162, and Cys165 each contribute to the [4Fe-4S] cluster site. S-adenosyl-L-methionine is bound by residues Gly223–Glu224, Ser255, Ser277–His279, and Asn354. Residue Cys397 is the S-methylcysteine intermediate of the active site.

The protein belongs to the radical SAM superfamily. RlmN family. The cofactor is [4Fe-4S] cluster.

The protein resides in the cytoplasm. The enzyme catalyses adenosine(2503) in 23S rRNA + 2 reduced [2Fe-2S]-[ferredoxin] + 2 S-adenosyl-L-methionine = 2-methyladenosine(2503) in 23S rRNA + 5'-deoxyadenosine + L-methionine + 2 oxidized [2Fe-2S]-[ferredoxin] + S-adenosyl-L-homocysteine. It carries out the reaction adenosine(37) in tRNA + 2 reduced [2Fe-2S]-[ferredoxin] + 2 S-adenosyl-L-methionine = 2-methyladenosine(37) in tRNA + 5'-deoxyadenosine + L-methionine + 2 oxidized [2Fe-2S]-[ferredoxin] + S-adenosyl-L-homocysteine. In terms of biological role, specifically methylates position 2 of adenine 2503 in 23S rRNA and position 2 of adenine 37 in tRNAs. m2A2503 modification seems to play a crucial role in the proofreading step occurring at the peptidyl transferase center and thus would serve to optimize ribosomal fidelity. The sequence is that of Dual-specificity RNA methyltransferase RlmN from Methylobacterium sp. (strain 4-46).